We begin with the raw amino-acid sequence, 221 residues long: Ribonuclease HII (221 aa).

Positions 29 to 220 (RRVAGVDEVG…LRDLQAGEIG (192 aa)) constitute an RNase H type-2 domain. The a divalent metal cation site is built by aspartate 35, glutamate 36, and aspartate 129. A disordered region spans residues 198–221 (LGPSPQHRRSFAPLRDLQAGEIGG).

It belongs to the RNase HII family. Mn(2+) serves as cofactor. It depends on Mg(2+) as a cofactor.

The protein resides in the cytoplasm. The catalysed reaction is Endonucleolytic cleavage to 5'-phosphomonoester.. Functionally, endonuclease that specifically degrades the RNA of RNA-DNA hybrids. This chain is Ribonuclease HII, found in Synechococcus sp. (strain JA-3-3Ab) (Cyanobacteria bacterium Yellowstone A-Prime).